The sequence spans 327 residues: GMP reductase (327 aa).

The active-site Thioimidate intermediate is the cysteine 175. NADP(+) is bound at residue 204–227; that stretch reads IIADGGIRTHGDIAKSIRFGASMV.

The protein belongs to the IMPDH/GMPR family. GuaC type 2 subfamily.

The enzyme catalyses IMP + NH4(+) + NADP(+) = GMP + NADPH + 2 H(+). Catalyzes the irreversible NADPH-dependent deamination of GMP to IMP. It functions in the conversion of nucleobase, nucleoside and nucleotide derivatives of G to A nucleotides, and in maintaining the intracellular balance of A and G nucleotides. This Exiguobacterium sp. (strain ATCC BAA-1283 / AT1b) protein is GMP reductase.